Consider the following 543-residue polypeptide: Glutamyl-tRNA(Gln) amidotransferase subunit A, chloroplastic/mitochondrial (543 aa).

Residues lysine 121 and serine 196 each act as charge relay system in the active site. The active-site Acyl-ester intermediate is the serine 220.

Belongs to the amidase family. GatA subfamily. As to quaternary structure, subunit of the heterotrimeric GatCAB amidotransferase (AdT) complex, composed of A, B and C subunits.

Its subcellular location is the mitochondrion. It localises to the plastid. It is found in the chloroplast stroma. The catalysed reaction is L-glutamyl-tRNA(Gln) + L-glutamine + ATP + H2O = L-glutaminyl-tRNA(Gln) + L-glutamate + ADP + phosphate + H(+). Allows the formation of correctly charged Gln-tRNA(Gln) through the transamidation of misacylated Glu-tRNA(Gln) in chloroplasts and mitochondria. The reaction takes place in the presence of glutamine and ATP through an activated gamma-phospho-Glu-tRNA(Gln). This is Glutamyl-tRNA(Gln) amidotransferase subunit A, chloroplastic/mitochondrial from Zea mays (Maize).